A 450-amino-acid polypeptide reads, in one-letter code: Protein indeterminate-domain 13 (450 aa).

Serine 54 carries the post-translational modification Phosphoserine. C2H2-type zinc fingers lie at residues 64–86 (FFCE…KRGH) and 106–136 (YICP…SRKH). A Nuclear localization signal motif is present at residues 128–135 (IKKHFSRK). The segment at 141–165 (WKCDKCSKKYAVISDWKAHNKICGS) adopts a C2H2-type 2; degenerate zinc-finger fold. Positions 143, 146, 159, 163, 170, 172, 185, and 189 each coordinate Zn(2+). A CCHC-type 2; atypical zinc finger spans residues 168-191 (FRCDCGTLFSRKDSFISHRSFCDV). The segment at 178–190 (RKDSFISHRSFCD) is SHR-binding. Residues 248–263 (FGQKFTNSNPTQQQPN) show a composition bias toward polar residues. The segment at 248 to 280 (FGQKFTNSNPTQQQPNALALSSPPSPRSTSDSV) is disordered.

It localises to the nucleus. Its function is as follows. Probable transcription factor. The polypeptide is Protein indeterminate-domain 13 (Arabidopsis thaliana (Mouse-ear cress)).